A 114-amino-acid chain; its full sequence is Probable 4-amino-4-deoxy-L-arabinose-phosphoundecaprenol flippase subunit ArnE (114 aa).

A run of 2 helical transmembrane segments spans residues 41-61 and 68-88; these read GWLWLALFSLGLGLLVWLLVL and VAYPMLSLNFVFITLIAHFVF. One can recognise an EamA domain in the interval 43–112; that stretch reads LWLALFSLGL…VIGGVLLLSR (70 aa).

This sequence belongs to the ArnE family. Heterodimer of ArnE and ArnF.

It is found in the cell inner membrane. The protein operates within bacterial outer membrane biogenesis; lipopolysaccharide biosynthesis. Its function is as follows. Translocates 4-amino-4-deoxy-L-arabinose-phosphoundecaprenol (alpha-L-Ara4N-phosphoundecaprenol) from the cytoplasmic to the periplasmic side of the inner membrane. This Pseudomonas fluorescens (strain ATCC BAA-477 / NRRL B-23932 / Pf-5) protein is Probable 4-amino-4-deoxy-L-arabinose-phosphoundecaprenol flippase subunit ArnE.